The chain runs to 263 residues: S-methyl-5'-thioadenosine phosphorylase (263 aa).

Residues Thr13, 55 to 56 (RH), and 88 to 89 (SA) contribute to the phosphate site. Met186 is a binding site for substrate. Thr187 lines the phosphate pocket. 210-212 (DYD) provides a ligand contact to substrate.

The protein belongs to the PNP/MTAP phosphorylase family. MTAP subfamily. As to quaternary structure, homohexamer. Dimer of a homotrimer.

It carries out the reaction S-methyl-5'-thioadenosine + phosphate = 5-(methylsulfanyl)-alpha-D-ribose 1-phosphate + adenine. The protein operates within amino-acid biosynthesis; L-methionine biosynthesis via salvage pathway; S-methyl-5-thio-alpha-D-ribose 1-phosphate from S-methyl-5'-thioadenosine (phosphorylase route): step 1/1. Its function is as follows. Catalyzes the reversible phosphorylation of S-methyl-5'-thioadenosine (MTA) to adenine and 5-methylthioribose-1-phosphate. Involved in the breakdown of MTA, a major by-product of polyamine biosynthesis. Responsible for the first step in the methionine salvage pathway after MTA has been generated from S-adenosylmethionine. Has broad substrate specificity with 6-aminopurine nucleosides as preferred substrates. The chain is S-methyl-5'-thioadenosine phosphorylase from Nitrosopumilus maritimus (strain SCM1).